The sequence spans 467 residues: Putative odorant receptor 85e (467 aa).

Residues 1–60 lie on the Cytoplasmic side of the membrane; sequence MASLQFHGNVDADIRYDISLDPARESNLFRLLMGLQLANGTKPSPRLPKWWPKRLEMIGK. Residues 61-81 traverse the membrane as a helical segment; it reads VLPKAYCSMVIFTSLHLGVLF. At 82 to 98 the chain is on the extracellular side; it reads TKTTLDVLPTGELQAIT. Residues 99–119 traverse the membrane as a helical segment; sequence DALTMTIIYFFTGYGTIYWCL. Residues 120-159 lie on the Cytoplasmic side of the membrane; that stretch reads RSRRLLAYMEHMNREYRHHSLAGVTFVSSHAAFRMSRNFT. A helical transmembrane segment spans residues 160 to 180; the sequence is VVWIMSCLLGVISWGVSPLML. The Extracellular portion of the chain corresponds to 181-212; the sequence is GIRMLPLQCWYPFDALGPGTYTAVYATQLFGQ. A helical transmembrane segment spans residues 213–233; it reads IMVGMTFGFGGSLFVTLSLLL. Over 234–286 the chain is Cytoplasmic; that stretch reads LGQFDVLYCSLKNLDAHTKLLGGESVNGLSSLQEELLLGDSKRELNQYVLLQE. Residues 287–307 traverse the membrane as a helical segment; it reads HPTDLLRLSAGRKCPDQGNAF. Residues 308-334 lie on the Extracellular side of the membrane; sequence HNALVECIRLHRFILHCSQELENLFSP. The helical transmembrane segment at 335–355 threads the bilayer; sequence YCLVKSLQITFQLCLLVFVGV. Topologically, residues 356 to 367 are cytoplasmic; the sequence is SGTREVLRIVNQ. The chain crosses the membrane as a helical span at residues 368 to 388; sequence LQYLGLTIFELLMFTYCGELL. Over 389 to 467 the chain is Extracellular; that stretch reads SRHSIRSGDA…LAAKKTESEL (79 aa).

It belongs to the insect chemoreceptor superfamily. Heteromeric odorant receptor channel (TC 1.A.69) family. Or2a subfamily. Interacts with Orco. Complexes exist early in the endomembrane system in olfactory sensory neurons (OSNs), coupling these complexes to the conserved ciliary trafficking pathway. As to expression, expressed in 15% of the 120 sensory neurons within the maxillary palp.

It localises to the cell membrane. Odorant receptor which mediates acceptance or avoidance behavior, depending on its substrates. The odorant receptor repertoire encodes a large collection of odor stimuli that vary widely in identity, intensity, and duration. May form a complex with Orco to form odorant-sensing units, providing sensitive and prolonged odorant signaling and calcium permeability. In Drosophila melanogaster (Fruit fly), this protein is Putative odorant receptor 85e (Or85e).